A 509-amino-acid chain; its full sequence is L-arabinose isomerase (509 aa).

Glu313, Glu340, His357, and His456 together coordinate Mn(2+).

This sequence belongs to the arabinose isomerase family. The cofactor is Mn(2+).

The catalysed reaction is beta-L-arabinopyranose = L-ribulose. Its pathway is carbohydrate degradation; L-arabinose degradation via L-ribulose; D-xylulose 5-phosphate from L-arabinose (bacterial route): step 1/3. In terms of biological role, catalyzes the conversion of L-arabinose to L-ribulose. The sequence is that of L-arabinose isomerase from Phocaeicola vulgatus (strain ATCC 8482 / DSM 1447 / JCM 5826 / CCUG 4940 / NBRC 14291 / NCTC 11154) (Bacteroides vulgatus).